The following is a 78-amino-acid chain: Small integral membrane protein 1 (78 aa).

Met-1 is modified (N-acetylmethionine). Residues 1–18 (MQPQESHVHYSRWEDGSR) show a composition bias toward basic and acidic residues. A disordered region spans residues 1–20 (MQPQESHVHYSRWEDGSRDG). At 1 to 46 (MQPQESHVHYSRWEDGSRDGVSLGAVSSTEEASRCRRISQRLCTGK) the chain is on the cytoplasmic side. Residues Ser-6, Ser-17, Ser-22, and Ser-27 each carry the phosphoserine modification. Residues 47-67 (LGIAMKVLGGVALFWIIFILG) traverse the membrane as a helical; Signal-anchor for type II membrane protein segment. Residues 68-78 (YLTGYYVHKCK) lie on the Extracellular side of the membrane. The segment at 68 to 78 (YLTGYYVHKCK) is displays the Vel antigen.

The protein belongs to the SMIM1 family. As to quaternary structure, homooligomer; disulfide-linked. As to expression, highly expressed in the bone marrow and expressed at lower levels in non-hematopoietic tissues. Highly expressed in erythroleukemia cell lines. Up-regulated in CD34+ hematopoietic progenitors cultured toward red blood cells.

The protein localises to the cell membrane. Functionally, regulator of red blood cell formation. The sequence is that of Small integral membrane protein 1 from Homo sapiens (Human).